The primary structure comprises 414 residues: Transforming growth factor beta-2 proprotein (414 aa).

Positions 1–20 (MHYCVLSAFLLLHLVTVALS) are cleaved as a signal peptide. Residues Asn-72, Asn-140, and Asn-241 are each glycosylated (N-linked (GlcNAc...) asparagine). Disulfide bonds link Cys-309–Cys-318, Cys-317–Cys-380, Cys-346–Cys-411, and Cys-350–Cys-413.

It belongs to the TGF-beta family. In terms of assembly, interacts with the serine proteases, HTRA1 and HTRA3. Interacts with ASPN. Interacts with MFAP5. Interacts with Transforming growth factor beta-2 (TGF-beta-2) chain; interaction is non-covalent and maintains (TGF-beta-2) in a latent state. Interacts with LRRC32/GARP; leading to regulate activation of TGF-beta-2. Interacts with NREP; the interaction results in a decrease in TGFB2 autoinduction. As to quaternary structure, transforming growth factor beta-2: Homodimer; disulfide-linked. Transforming growth factor beta-2: Interacts with TGF-beta receptors (TGFBR1 and TGFBR2), leading to signal transduction. In terms of processing, the precursor proprotein is cleaved in the Golgi apparatus to form Transforming growth factor beta-2 (TGF-beta-2) and Latency-associated peptide (LAP) chains, which remain non-covalently linked, rendering TGF-beta-2 inactive.

The protein resides in the secreted. The protein localises to the extracellular space. Its subcellular location is the extracellular matrix. Functionally, precursor of the Latency-associated peptide (LAP) and Transforming growth factor beta-2 (TGF-beta-2) chains, which constitute the regulatory and active subunit of TGF-beta-2, respectively. Required to maintain the Transforming growth factor beta-2 (TGF-beta-2) chain in a latent state during storage in extracellular matrix. Associates non-covalently with TGF-beta-2 and regulates its activation via interaction with 'milieu molecules', such as LTBP1 and LRRC32/GARP, that control activation of TGF-beta-2. In terms of biological role, multifunctional protein that regulates various processes such as angiogenesis and heart development. Activation into mature form follows different steps: following cleavage of the proprotein in the Golgi apparatus, Latency-associated peptide (LAP) and Transforming growth factor beta-2 (TGF-beta-2) chains remain non-covalently linked rendering TGF-beta-2 inactive during storage in extracellular matrix. At the same time, LAP chain interacts with 'milieu molecules', such as LTBP1 and LRRC32/GARP, that control activation of TGF-beta-2 and maintain it in a latent state during storage in extracellular milieus. Once activated following release of LAP, TGF-beta-2 acts by binding to TGF-beta receptors (TGFBR1 and TGFBR2), which transduce signal. The chain is Transforming growth factor beta-2 proprotein (TGFB2) from Bos taurus (Bovine).